A 263-amino-acid chain; its full sequence is Thymidylate synthase (263 aa).

DUMP is bound by residues Arg-25 and 123-124 (RR). Catalysis depends on Cys-143, which acts as the Nucleophile. DUMP contacts are provided by residues 163–166 (RSGD), Asn-174, and 204–206 (HIY). Residue Asp-166 coordinates (6R)-5,10-methylene-5,6,7,8-tetrahydrofolate. Ser-262 is a (6R)-5,10-methylene-5,6,7,8-tetrahydrofolate binding site.

This sequence belongs to the thymidylate synthase family. Bacterial-type ThyA subfamily. As to quaternary structure, homodimer.

It localises to the cytoplasm. It carries out the reaction dUMP + (6R)-5,10-methylene-5,6,7,8-tetrahydrofolate = 7,8-dihydrofolate + dTMP. Its pathway is pyrimidine metabolism; dTTP biosynthesis. Catalyzes the reductive methylation of 2'-deoxyuridine-5'-monophosphate (dUMP) to 2'-deoxythymidine-5'-monophosphate (dTMP) while utilizing 5,10-methylenetetrahydrofolate (mTHF) as the methyl donor and reductant in the reaction, yielding dihydrofolate (DHF) as a by-product. This enzymatic reaction provides an intracellular de novo source of dTMP, an essential precursor for DNA biosynthesis. The chain is Thymidylate synthase from Clostridium beijerinckii (strain ATCC 51743 / NCIMB 8052) (Clostridium acetobutylicum).